The sequence spans 473 residues: Glutamate--tRNA ligase (473 aa).

Positions 9-19 (PSPTGELHLGS) match the 'HIGH' region motif. A 'KMSKS' region motif is present at residues 237 to 241 (KLSKK). K240 contributes to the ATP binding site.

This sequence belongs to the class-I aminoacyl-tRNA synthetase family. Glutamate--tRNA ligase type 1 subfamily. Monomer.

It is found in the cytoplasm. It catalyses the reaction tRNA(Glu) + L-glutamate + ATP = L-glutamyl-tRNA(Glu) + AMP + diphosphate. In terms of biological role, catalyzes the attachment of glutamate to tRNA(Glu) in a two-step reaction: glutamate is first activated by ATP to form Glu-AMP and then transferred to the acceptor end of tRNA(Glu). This chain is Glutamate--tRNA ligase, found in Wigglesworthia glossinidia brevipalpis.